The following is a 349-amino-acid chain: Probable G-protein coupled receptor 21 (349 aa).

Over 1–32 (MNSTWDGNQSSHPFCLLALGYLETVRFCLLEV) the chain is Extracellular. 2 N-linked (GlcNAc...) asparagine glycosylation sites follow: asparagine 2 and asparagine 8. Residues 33–53 (LIIVFLTVLIISGNIIVIFVF) traverse the membrane as a helical segment. The Cytoplasmic segment spans residues 54-75 (HCAPLLNHHSTSYFIQTMAYAD). Residues 76-96 (LLVGVSCLVPSLSLLYYPLPI) form a helical membrane-spanning segment. The Extracellular segment spans residues 97–104 (EEAMTCQV). Residues 105–125 (FGFVVSVLKSISMASLACISI) traverse the membrane as a helical segment. Residues 126-147 (DRYIAITKPLTYNTLVTPWRLR) lie on the Cytoplasmic side of the membrane. A helical membrane pass occupies residues 148–168 (LCIFLIWLYSTLVFLPSFFHW). Residues 169-191 (GKPGYHGDVFQWCAESWHTNSYF) lie on the Extracellular side of the membrane. A helical transmembrane segment spans residues 192–212 (TLFIVMMLYAPAALIVCFTYF). At 213–252 (NIFRICQQHTKEISERQARFSSQNGETGEPQTCPDKRYAM) the chain is on the cytoplasmic side. A helical membrane pass occupies residues 253-273 (VLFRITSVFYVLWLPYIIYFL). Over 274–283 (LESSTGCSSR) the chain is Extracellular. A helical membrane pass occupies residues 284 to 304 (LASFLTTWLAISNSFCNCIIY). Topologically, residues 305–349 (SLSNSVFQRGLKGLSGSLCTSCASHTTAKDPYTVRCKGPPNGSHI) are cytoplasmic.

This sequence belongs to the G-protein coupled receptor 1 family.

It localises to the cell membrane. In terms of biological role, orphan receptor. In Mus musculus (Mouse), this protein is Probable G-protein coupled receptor 21 (Gpr21).